The following is a 284-amino-acid chain: D-tagatose-1,6-bisphosphate aldolase subunit GatY (284 aa).

D82 (proton donor) is an active-site residue. Zn(2+) is bound by residues H83 and H180. G181 provides a ligand contact to dihydroxyacetone phosphate. H208 contributes to the Zn(2+) binding site. Residues G209–S211 and N230–T233 each bind dihydroxyacetone phosphate.

This sequence belongs to the class II fructose-bisphosphate aldolase family. TagBP aldolase GatY subfamily. As to quaternary structure, forms a complex with GatZ. The cofactor is Zn(2+).

The enzyme catalyses D-tagatofuranose 1,6-bisphosphate = D-glyceraldehyde 3-phosphate + dihydroxyacetone phosphate. The protein operates within carbohydrate metabolism; D-tagatose 6-phosphate degradation; D-glyceraldehyde 3-phosphate and glycerone phosphate from D-tagatose 6-phosphate: step 2/2. Its function is as follows. Catalytic subunit of the tagatose-1,6-bisphosphate aldolase GatYZ, which catalyzes the reversible aldol condensation of dihydroxyacetone phosphate (DHAP or glycerone-phosphate) with glyceraldehyde 3-phosphate (G3P) to produce tagatose 1,6-bisphosphate (TBP). Requires GatZ subunit for full activity and stability. Is involved in the catabolism of galactitol. This is D-tagatose-1,6-bisphosphate aldolase subunit GatY from Escherichia coli O6:K15:H31 (strain 536 / UPEC).